Here is a 253-residue protein sequence, read N- to C-terminus: Sulfate transporter CysZ (253 aa).

The next 4 membrane-spanning stretches (helical) occupy residues 31–51 (FVIL…WWLF), 75–95 (LLWP…FSTI), 151–171 (IVLL…PVLW), and 222–242 (IPLL…AMWV).

This sequence belongs to the CysZ family.

It localises to the cell inner membrane. High affinity, high specificity proton-dependent sulfate transporter, which mediates sulfate uptake. Provides the sulfur source for the cysteine synthesis pathway. This chain is Sulfate transporter CysZ, found in Escherichia coli O8 (strain IAI1).